Here is a 369-residue protein sequence, read N- to C-terminus: O-methyltransferase 12 (369 aa).

Residues Gly181, Asp204, 229 to 231 (GDF), Asp230, Phe231, and Lys244 contribute to the S-adenosyl-L-methionine site. His248 acts as the Proton acceptor in catalysis.

The protein belongs to the class I-like SAM-binding methyltransferase superfamily. Cation-independent O-methyltransferase family. COMT subfamily.

The enzyme catalyses resorcinol + S-adenosyl-L-methionine = 3-methoxyphenol + S-adenosyl-L-homocysteine + H(+). S-adenosyl-L-methionine dependent O-methyltransferase that may be involved in modifying resorcinol ring to synthesize a variant of 4-methyl-5-pentylbenzene-1,3-diol. This Dictyostelium discoideum (Social amoeba) protein is O-methyltransferase 12 (omt12).